The primary structure comprises 252 residues: 5'-nucleotidase SurE (252 aa).

4 residues coordinate a divalent metal cation: Asp8, Asp9, Ser40, and Asn93.

Belongs to the SurE nucleotidase family. Requires a divalent metal cation as cofactor.

It is found in the cytoplasm. The catalysed reaction is a ribonucleoside 5'-phosphate + H2O = a ribonucleoside + phosphate. Nucleotidase that shows phosphatase activity on nucleoside 5'-monophosphates. The chain is 5'-nucleotidase SurE from Erythrobacter litoralis (strain HTCC2594).